The following is a 375-amino-acid chain: tRNA-specific 2-thiouridylase MnmA (375 aa).

Residues 7–14 (GLSGGVDS) and methionine 33 each bind ATP. The interval 102-104 (NPD) is interaction with target base in tRNA. Catalysis depends on cysteine 107, which acts as the Nucleophile. A disulfide bridge connects residues cysteine 107 and cysteine 205. Glycine 132 is a binding site for ATP. The interval 155–157 (KDQ) is interaction with tRNA. Cysteine 205 functions as the Cysteine persulfide intermediate in the catalytic mechanism. The interval 313 to 314 (RY) is interaction with tRNA.

The protein belongs to the MnmA/TRMU family.

It localises to the cytoplasm. The enzyme catalyses S-sulfanyl-L-cysteinyl-[protein] + uridine(34) in tRNA + AH2 + ATP = 2-thiouridine(34) in tRNA + L-cysteinyl-[protein] + A + AMP + diphosphate + H(+). In terms of biological role, catalyzes the 2-thiolation of uridine at the wobble position (U34) of tRNA, leading to the formation of s(2)U34. This Phytoplasma australiense protein is tRNA-specific 2-thiouridylase MnmA.